A 145-amino-acid polypeptide reads, in one-letter code: Large ribosomal subunit protein bL9 (145 aa).

The protein belongs to the bacterial ribosomal protein bL9 family.

Binds to the 23S rRNA. In Mesomycoplasma hyopneumoniae (strain J / ATCC 25934 / NCTC 10110) (Mycoplasma hyopneumoniae), this protein is Large ribosomal subunit protein bL9.